The sequence spans 337 residues: MRLTASAIAEQFGLTVVGDGTTEVSGVATLAHAGAGQLSFLSNPRYRPQLADTQAAVVVLRADDADAAKGTALVAKDPYTAFAKIAALFDVAPVREPGIHASAVIDPTAQVSPGAHVGPFVSIGARSRVGDGCVIGTGSIIGEDCVVDEGSELLARVTLVTRVRLGKRVRIHPGAVIGADGFGLAMDAGHWIKVPQLGGVVIGDDCEIGANTCIDRGALEDTVLEEDVRVDNLVQIAHNCRIGAHSAIAGCTGIAGSAKIGRYCLLGGHVGVVGHLEICDKVVITGKSVVRNSIHEPGEYSSGTPLTDNRTWRKNAARFKQLDVLARRILAVGKEKE.

H238 serves as the catalytic Proton acceptor.

The protein belongs to the transferase hexapeptide repeat family. LpxD subfamily. In terms of assembly, homotrimer.

It catalyses the reaction a UDP-3-O-[(3R)-3-hydroxyacyl]-alpha-D-glucosamine + a (3R)-hydroxyacyl-[ACP] = a UDP-2-N,3-O-bis[(3R)-3-hydroxyacyl]-alpha-D-glucosamine + holo-[ACP] + H(+). It participates in bacterial outer membrane biogenesis; LPS lipid A biosynthesis. Its function is as follows. Catalyzes the N-acylation of UDP-3-O-acylglucosamine using 3-hydroxyacyl-ACP as the acyl donor. Is involved in the biosynthesis of lipid A, a phosphorylated glycolipid that anchors the lipopolysaccharide to the outer membrane of the cell. This is UDP-3-O-acylglucosamine N-acyltransferase from Xanthomonas euvesicatoria pv. vesicatoria (strain 85-10) (Xanthomonas campestris pv. vesicatoria).